An 848-amino-acid chain; its full sequence is Alanine--tRNA ligase (848 aa).

Residues H553, H557, C654, and H658 each contribute to the Zn(2+) site.

The protein belongs to the class-II aminoacyl-tRNA synthetase family. It depends on Zn(2+) as a cofactor.

The protein localises to the cytoplasm. The enzyme catalyses tRNA(Ala) + L-alanine + ATP = L-alanyl-tRNA(Ala) + AMP + diphosphate. Functionally, catalyzes the attachment of alanine to tRNA(Ala) in a two-step reaction: alanine is first activated by ATP to form Ala-AMP and then transferred to the acceptor end of tRNA(Ala). Also edits incorrectly charged Ser-tRNA(Ala) and Gly-tRNA(Ala) via its editing domain. In Neorickettsia sennetsu (strain ATCC VR-367 / Miyayama) (Ehrlichia sennetsu), this protein is Alanine--tRNA ligase.